A 427-amino-acid chain; its full sequence is Zinc finger protein 2 (427 aa).

A KRAB domain is found at 14 to 85; sequence VTFEDVAVTF…GFHGSEEKTW (72 aa). A disordered region spans residues 111-142; the sequence is HRKQSSLCPKREIQTLTGGPEPEKESPKARTC. C2H2-type zinc fingers lie at residues 169-191, 197-219, 225-247, 253-275, 281-303, 309-331, 337-359, and 365-387; these read QECSECGKTFFDHSSLIRHQRTH, YDCPECGKAFSHRSSLSRHLMFH, YECDACGKAFFDRSSLTVHQRIH, FKCNDCGKAFFDRSSLTRHQRIH, YECQQCGKAFSQKSILTRHLLTH, YECRDCGKAFYGVTSLNRHQKVH, YQCSECGKAFFDRSSLTQHQKIH, and YECGECGKAFSQRCRLTRHQRVH. A C2H2-type 9; degenerate zinc finger spans residues 393-415; the sequence is FECSVCGKEFSSKSSIIQHQRRY.

The protein belongs to the krueppel C2H2-type zinc-finger protein family.

The protein localises to the nucleus. Its function is as follows. May be involved in transcriptional regulation. The polypeptide is Zinc finger protein 2 (Mus musculus (Mouse)).